The following is a 549-amino-acid chain: Limonene dehydrogenase subunit B (549 aa).

Belongs to the carotenoid/retinoid oxidoreductase family. Heterodimer composed of CtmA and CtmB. FAD is required as a cofactor.

The protein resides in the cytoplasm. It catalyses the reaction (4S)-limonene + A + H2O = (4S)-perillyl alcohol + AH2. It carries out the reaction (4R)-limonene + A + H2O = (4R)-perillyl alcohol + AH2. It functions in the pathway terpene metabolism; monoterpene degradation. Its activity is regulated as follows. The presence of molecular oxygen causes a 40% reduction in specific activity. Functionally, involved in the degradation of the cyclic monoterpene limonene. Catalyzes the oxidation of limonene at the primary methyl group, forming perillyl alcohol. Hydroxylates the R- and S-enantiomers to their respective enantiomeric form of perillyl alcohol at a similar rate. Native CtmAB oxidizes a wide range of monocyclic monoterpenes containing the allylic methyl group motif (1-methyl-cyclohex-1-ene). Can also catalyze the reverse reaction, the reduction of perillyl alcohol to limonene, but with lower efficiency. Cannot use molecular oxygen as an electron acceptor. The natural electron acceptor is likely a heterodimeric electron transfer flavoprotein (ETF). The polypeptide is Limonene dehydrogenase subunit B (Castellaniella defragrans (strain DSM 12143 / CCUG 39792 / 65Phen) (Alcaligenes defragrans)).